The following is a 256-amino-acid chain: Thiazole synthase (256 aa).

Lys-95 functions as the Schiff-base intermediate with DXP in the catalytic mechanism. Residues Gly-156, 182-183 (AG), and 204-205 (NT) each bind 1-deoxy-D-xylulose 5-phosphate.

It belongs to the ThiG family. In terms of assembly, homotetramer. Forms heterodimers with either ThiH or ThiS.

The protein localises to the cytoplasm. The enzyme catalyses [ThiS sulfur-carrier protein]-C-terminal-Gly-aminoethanethioate + 2-iminoacetate + 1-deoxy-D-xylulose 5-phosphate = [ThiS sulfur-carrier protein]-C-terminal Gly-Gly + 2-[(2R,5Z)-2-carboxy-4-methylthiazol-5(2H)-ylidene]ethyl phosphate + 2 H2O + H(+). It participates in cofactor biosynthesis; thiamine diphosphate biosynthesis. In terms of biological role, catalyzes the rearrangement of 1-deoxy-D-xylulose 5-phosphate (DXP) to produce the thiazole phosphate moiety of thiamine. Sulfur is provided by the thiocarboxylate moiety of the carrier protein ThiS. In vitro, sulfur can be provided by H(2)S. The polypeptide is Thiazole synthase (Escherichia coli O157:H7).